An 872-amino-acid polypeptide reads, in one-letter code: Exoglucanase A (872 aa).

A signal peptide spans 1–40; sequence MSTLGKRAGVRRRVRAVATAATATALVAVPLTTLATSASA. The interval 41–477 is catalytic; sequence APVHVDNPYA…PVIGGTTPVE (437 aa). Disulfide bonds link Cys-140/Cys-202 and Cys-374/Cys-428. Asp-188 functions as the Proton donor in the catalytic mechanism. The Nucleophile role is filled by Asp-410. Fibronectin type-III domains follow at residues 484-569, 579-667, and 677-765; these read VPTG…TQSG, VPAG…TQTG, and VPTG…TQAA. The region spanning 763–872 is the CBM2 domain; sequence QAATSGGCTV…TLNGVACTLG (110 aa). Residues Cys-770 and Cys-869 are joined by a disulfide bond.

This sequence belongs to the glycosyl hydrolase 6 (cellulase B) family.

The enzyme catalyses Hydrolysis of (1-&gt;4)-beta-D-glucosidic linkages in cellulose and cellotetraose, releasing cellobiose from the non-reducing ends of the chains.. Functionally, this enzyme hydrolyzes 1,4-beta-D-glucosidic linkages of cellulose. Weak activity against carboxymethylcellulose, bacterial microcrystalline cellulose and barley beta-glucan. Also has weak endoglucanase activity. Hydrolyzes glucosidic bonds with inversion of anomeric configuration. This chain is Exoglucanase A (cbhA), found in Cellulomonas fimi (strain ATCC 484 / DSM 20113 / JCM 1341 / CCUG 24087 / LMG 16345 / NBRC 15513 / NCIMB 8980 / NCTC 7547 / NRS-133).